Consider the following 1410-residue polypeptide: Slit homolog 1 protein (1410 aa).

The N-terminal stretch at 1–16 is a signal peptide; sequence MLICFIFILLIPESAT. The LRRNT 1 domain maps to 17–43; it reads CPAECVCVDRTVSCVGQQLTEVPQNIP. LRR repeat units lie at residues 22–42, 43–66, 67–90, 91–114, 116–138, 140–162, 163–186, 219–242, 286–309, 310–333, 335–357, 358–381, 383–405, 407–430, 442–465, 489–510, 511–535, 536–559, 561–583, and 585–607; these read VCVD…PQNI, PNDT…DFSS, LMNL…SFSS, LVFL…VFQN, LKLT…QLQG, EFLE…VISS, WVSL…SNAR, TVCA…FMTC, PPST…SFKN, LKNL…AFLG, HNLH…TFEG, LGSL…TFDH, PKLS…TFQN, TSLS…WLAQ, ARCE…KFKC, CDCY…PTSI, PRFA…NIHV, LENL…SFEK, SKLR…VLDE, and SNLE…FFNK. Positions 195–243 constitute an LRRCT 1 domain; sequence NPWNCDCRLRWMRKWLEKAEGQNKTVCATPLNLQGSSIEILQDKFMTCS. Residues 259–286 enclose the LRRNT 2 domain; the sequence is ICPLPCTCTGTTVDCRDSGLTYVPTNLP. One can recognise an LRRCT 2 domain in the interval 417–466; it reads NPLICDCNLQWLAQINLQKNIETSGARCEQPKRLRKKKFATLPPNKFKCK. The 28-residue stretch at 484–511 folds into the LRRNT 3 domain; the sequence is ICPTQCDCYGTTVDCNKRGLNTIPTSIP. One can recognise an LRRCT 3 domain in the interval 619-671; the sequence is NDLLCDCRILPLMSWLRSNSSHSIDIPPCQQFQYSDNESDKQRCAAFPEETCS. Residues 677 to 703 form the LRRNT 4 domain; the sequence is CPPKCSCLDRVVRCSNKNLTSFPSRIP. 6 LRR repeats span residues 681-703, 704-726, 727-750, 752-774, 775-798, and 800-823; these read CSCL…SRIP, FDTT…DLNR, LYSL…TFSN, TRLS…AFNG, LNAL…AFSN, and TSIT…WFSK. An LRRCT 4 domain is found at 810-859; sequence NSLYCDCNMAWFSKWIKSKFIEAGIARCEYPNTVSNQLLLTAQPYQFTCD. EGF-like domains are found at residues 871–906 and 908–945; these read DLCL…VHCE and QIDA…DYCE. Cystine bridges form between C873-C884, C878-C894, C896-C905, C912-C923, C917-C933, C935-C944, C951-C962, C956-C971, C973-C982, C989-C1002, C996-C1011, C1013-C1022, C1029-C1040, C1034-C1049, C1051-C1060, C1076-C1086, C1081-C1097, and C1099-C1108. An EGF-like 1; calcium-binding domain is found at 947–983; the sequence is NIDDCVNSKCENGGKCVDLINSYRCDCPMEYEGKHCE. The EGF-like 3 domain maps to 985 to 1023; that stretch reads KLEYCTKKLNPCENNGKCIPINGSYSCMCSPGFTGNNCE. An EGF-like 2; calcium-binding domain is found at 1025–1061; the sequence is NIDDCKNVECQNGGSCVDGILSYDCLCRPGYAGQYCE. Residues 1072–1109 enclose the EGF-like 4 domain; that stretch reads KTDACQQSACGQGECVASQNSSDFTCKCHEGFSGPSCD. Residues 1112 to 1285 enclose the Laminin G-like domain; it reads MSVGFKNPGA…LENVNTEQSC (174 aa). One copy of the LRR 27 repeat lies at 1197–1221; it reads TSERKCFLQIDKNPVQIVENSGKSD. 8 disulfide bridges follow: C1259/C1285, C1292/C1302, C1297/C1314, C1316/C1325, C1332/C1368, C1346/C1382, C1357/C1398, and C1361/C1400. Residues 1288-1326 form the EGF-like 5 domain; it reads TVNFCAGIDCGNGKCTNNALSPKGYMCQCDSHFSGEHCD. One can recognise a CTCK domain in the interval 1332–1406; that stretch reads CDKQKFRRHH…QCQCEPTKSV (75 aa).

Interacts with eva-1.

The protein localises to the secreted. Functions as a ligand for sax-3 receptor during larval development. Acts via the sax-3/Robo receptor to direct ventral axon guidance and guidance at the midline during embryonic development. In Caenorhabditis elegans, this protein is Slit homolog 1 protein (slt-1).